Reading from the N-terminus, the 76-residue chain is Envelope small membrane protein (76 aa).

The Virion surface segment spans residues 1–16 (MYSFVSEETGTLIVNS). Residues 17–37 (VLLFLAFVVFLLVTLAILTAL) traverse the membrane as a helical segment. At 38 to 76 (RLCAYCCNIVNVSLVKPTVYVYSRVKNLNSSEGVPDLLV) the chain is on the intravirion side.

It belongs to the betacoronaviruses E protein family. In terms of assembly, homopentamer. Interacts with membrane protein M in the budding compartment of the host cell, which is located between endoplasmic reticulum and the Golgi complex. Interacts with Nucleoprotein.

Its subcellular location is the host Golgi apparatus membrane. In terms of biological role, plays a central role in virus morphogenesis and assembly. Acts as a viroporin and self-assembles in host membranes forming pentameric protein-lipid pores that allow ion transport. Also plays a role in the induction of apoptosis. The polypeptide is Envelope small membrane protein (Rhinolophus sinicus (Chinese rufous horseshoe bat)).